The chain runs to 272 residues: Orotidine 5'-phosphate decarboxylase (272 aa).

Catalysis depends on K95, which acts as the Proton donor.

This sequence belongs to the OMP decarboxylase family. Type 2 subfamily.

The enzyme catalyses orotidine 5'-phosphate + H(+) = UMP + CO2. The protein operates within pyrimidine metabolism; UMP biosynthesis via de novo pathway; UMP from orotate: step 2/2. This is Orotidine 5'-phosphate decarboxylase from Cupriavidus taiwanensis (strain DSM 17343 / BCRC 17206 / CCUG 44338 / CIP 107171 / LMG 19424 / R1) (Ralstonia taiwanensis (strain LMG 19424)).